Consider the following 234-residue polypeptide: Sugar fermentation stimulation protein A (234 aa).

Positions L201 to S220 form a DNA-binding region, H-T-H motif.

Belongs to the SfsA family.

Binds to DNA non-specifically. Could be a regulatory factor involved in maltose metabolism. This Shigella sonnei (strain Ss046) protein is Sugar fermentation stimulation protein A.